The following is a 74-amino-acid chain: Brevinin-2MT1 (74 aa).

Positions 1–22 (MFTMKKSLLVLFFLGTISLSLC) are cleaved as a signal peptide. Positions 23–39 (EEERNADEDDGEMTEEE) are cleaved as a propeptide — removed in mature form. Cysteines 68 and 74 form a disulfide.

It belongs to the frog skin active peptide (FSAP) family. Brevinin subfamily. As to expression, expressed by the skin glands.

It is found in the secreted. Functionally, antimicrobial peptide. Active against a variety of Gram-negative and Gram-positive bacterial strains. Active against fungi. Shows hemolytic activity against human erythrocytes. This Amolops mantzorum (Sichuan torrent frog) protein is Brevinin-2MT1.